A 1054-amino-acid polypeptide reads, in one-letter code: DNA-directed RNA polymerase subunit beta' (1054 aa).

Asp383, Asp385, and Asp387 together coordinate Mg(2+). Residues Cys752, Cys826, Cys833, and Cys836 each contribute to the Zn(2+) site.

It belongs to the RNA polymerase beta' chain family. In terms of assembly, the RNAP catalytic core consists of 2 alpha, 1 beta, 1 beta' and 1 omega subunit. When a sigma factor is associated with the core the holoenzyme is formed, which can initiate transcription. The cofactor is Mg(2+). Zn(2+) is required as a cofactor.

It catalyses the reaction RNA(n) + a ribonucleoside 5'-triphosphate = RNA(n+1) + diphosphate. In terms of biological role, DNA-dependent RNA polymerase catalyzes the transcription of DNA into RNA using the four ribonucleoside triphosphates as substrates. This Weissella paramesenteroides (Leuconostoc paramesenteroides) protein is DNA-directed RNA polymerase subunit beta'.